The following is a 1162-amino-acid chain: Spike glycoprotein (1162 aa).

Residues 1–18 (MLVTPLLLVTLLCALCSA) form the signal peptide. Residues 19–1095 (VLYDSSSYVY…LKTYIKWPWY (1077 aa)) lie on the Extracellular side of the membrane. N-linked (GlcNAc...) asparagine; by host glycans are attached at residues asparagine 51, asparagine 77, asparagine 103, asparagine 144, asparagine 163, asparagine 178, asparagine 212, asparagine 237, asparagine 247, asparagine 264, asparagine 276, asparagine 306, asparagine 425, asparagine 447, asparagine 513, asparagine 530, asparagine 579, asparagine 591, asparagine 669, asparagine 676, and asparagine 714. Residues 769-874 (IPFATQLQAR…QVDRLITGRL (106 aa)) form a heptad repeat 1 (HR1) region. Residues 822–866 (QDVVSKQSAILTETMASLNKNFGAISSVIQEIYQQFDAIQANAQV) are a coiled coil. Asparagine 947, asparagine 960, asparagine 979, asparagine 1014, asparagine 1038, asparagine 1051, and asparagine 1074 each carry an N-linked (GlcNAc...) asparagine; by host glycan. The heptad repeat 2 (HR2) stretch occupies residues 1024-1105 (NDDFDFNDEL…VWLAIAFATI (82 aa)). Residues 1055–1083 (PILDIDSEIDRIQGVIQGLNDSLIDLEKL) are a coiled coil. The helical transmembrane segment at 1096–1116 (VWLAIAFATIIFILILGWVFF) threads the bilayer. The Cytoplasmic portion of the chain corresponds to 1117-1162 (MTGCCGCCCGCFGIMPLMSKCGKKSSYYTTFDNDVVTEQYRPKKSV). The short motif at 1159–1162 (KKSV) is the Di-lysine motif element.

This sequence belongs to the gammacoronaviruses spike protein family. As to quaternary structure, homotrimer; each monomer consists of a S1 and a S2 subunit. The resulting peplomers protrude from the virus surface as spikes. Specific enzymatic cleavages in vivo yield mature proteins. The precursor is processed into S1 and S2 by host cell furin or furin-like protease to yield the mature S1 and S2 proteins. The cleavage site between S1 and S2 requires the optimal sequence [KR]-X-[KR]-R. Additionally, a second cleavage leads to the release of a fusion peptide after viral attachment to host cell receptor.

It localises to the virion membrane. The protein resides in the host endoplasmic reticulum-Golgi intermediate compartment membrane. Attaches the virion to the host cell membrane by interacting with sialic acids, initiating the infection. Functionally, mediates fusion of the virion and cellular membranes by acting as a class I viral fusion protein. Under the current model, the protein has at least 3 conformational states: pre-fusion native state, pre-hairpin intermediate state, and post-fusion hairpin state. During viral and target cell membrane fusion, the coiled coil regions (heptad repeats) assume a trimer-of-hairpins structure, positioning the fusion peptide in close proximity to the C-terminal region of the ectodomain. The formation of this structure appears to drive apposition and subsequent fusion of viral and target cell membranes. Its function is as follows. Acts as a viral fusion peptide after S2 cleavage occurring upon virus endocytosis. This is Spike glycoprotein from Avian infectious bronchitis virus (strain Beaudette) (IBV).